The following is a 66-amino-acid chain: Toxin BomPI (66 aa).

In terms of domain architecture, LCN-type CS-alpha/beta spans R2–H64. 4 disulfide bridges follow: C12/C63, C16/C36, C22/C46, and C26/C48.

This sequence belongs to the long (4 C-C) scorpion toxin superfamily. Sodium channel inhibitor family. Alpha subfamily. Expressed by the venom gland.

The protein localises to the secreted. Its function is as follows. Alpha toxins bind voltage-independently at site-3 of sodium channels (Nav) and inhibit the inactivation of the activated channels, thereby blocking neuronal transmission. This chain is Toxin BomPI, found in Buthus occitanus mardochei (Moroccan scorpion).